Here is a 414-residue protein sequence, read N- to C-terminus: Arrestin domain-containing protein 3 (414 aa).

Short sequence motifs (PPxY motif) lie at residues 346-349 and 391-394; these read PPSY and PPLY. The segment at 393–414 is disordered; sequence LYSEIDPNPDQSSEDRPSCPSR. Positions 405 to 414 are enriched in basic and acidic residues; the sequence is SEDRPSCPSR.

Belongs to the arrestin family. Interacts (via PPxY motifs) with NEDD4 (via WW domains). Interacts with ADRB2. Interacts with ADRB3. Interacts with HGS (via PPxY motifs). Does not bind TXN (thioredoxin). Interacts with ITCH.

It is found in the cytoplasm. It localises to the cell membrane. Its subcellular location is the lysosome. The protein resides in the endosome. The protein localises to the early endosome. In terms of biological role, adapter protein that plays a role in regulating cell-surface expression of adrenergic receptors and probably also other G protein-coupled receptors. Plays a role in NEDD4-mediated ubiquitination and endocytosis af activated ADRB2 and subsequent ADRB2 degradation. May recruit NEDD4 to ADRB2. Alternatively, may function as adapter protein that does not play a major role in recruiting NEDD4 to ADRB2, but rather plays a role in a targeting ADRB2 to endosomes. This is Arrestin domain-containing protein 3 (Arrdc3) from Rattus norvegicus (Rat).